We begin with the raw amino-acid sequence, 798 residues long: Penicillin-binding protein 1A (798 aa).

Over 1–9 the chain is Cytoplasmic; it reads MIKKILTTC. The helical; Signal-anchor for type II membrane protein transmembrane segment at 10-30 threads the bilayer; it reads FGLVFGFCVFGVGLVAIAILV. Residues 31–798 are Periplasmic-facing; sequence TYPKLPSLDS…SKQQQLDSLF (768 aa). The tract at residues 50–218 is transglycosylase; it reads LTIYSADGEV…SAYNPIVNPE (169 aa). The active-site Proton donor; for transglycosylase activity is E88. The segment at 378-700 is transpeptidase; the sequence is RRALGFAARA…GTIAVPVWVD (323 aa). S461 acts as the Acyl-ester intermediate; for transpeptidase activity in catalysis. Positions 738–798 are disordered; sequence GLTLDNSGIA…SKQQQLDSLF (61 aa). The span at 768 to 777 shows a compositional bias: basic and acidic residues; the sequence is AADDEVRQDM. A compositionally biased stretch (polar residues) spans 783-798; sequence LPSNTGSKQQQLDSLF.

It in the N-terminal section; belongs to the glycosyltransferase 51 family. The protein in the C-terminal section; belongs to the transpeptidase family.

Its subcellular location is the cell inner membrane. The enzyme catalyses [GlcNAc-(1-&gt;4)-Mur2Ac(oyl-L-Ala-gamma-D-Glu-L-Lys-D-Ala-D-Ala)](n)-di-trans,octa-cis-undecaprenyl diphosphate + beta-D-GlcNAc-(1-&gt;4)-Mur2Ac(oyl-L-Ala-gamma-D-Glu-L-Lys-D-Ala-D-Ala)-di-trans,octa-cis-undecaprenyl diphosphate = [GlcNAc-(1-&gt;4)-Mur2Ac(oyl-L-Ala-gamma-D-Glu-L-Lys-D-Ala-D-Ala)](n+1)-di-trans,octa-cis-undecaprenyl diphosphate + di-trans,octa-cis-undecaprenyl diphosphate + H(+). The catalysed reaction is Preferential cleavage: (Ac)2-L-Lys-D-Ala-|-D-Ala. Also transpeptidation of peptidyl-alanyl moieties that are N-acyl substituents of D-alanine.. The protein operates within cell wall biogenesis; peptidoglycan biosynthesis. Its function is as follows. Cell wall formation. Synthesis of cross-linked peptidoglycan from the lipid intermediates. The enzyme has a penicillin-insensitive transglycosylase N-terminal domain (formation of linear glycan strands) and a penicillin-sensitive transpeptidase C-terminal domain (cross-linking of the peptide subunits). The polypeptide is Penicillin-binding protein 1A (mrcA) (Neisseria meningitidis serogroup A / serotype 4A (strain DSM 15465 / Z2491)).